Consider the following 83-residue polypeptide: Protein Vpu (83 aa).

Residues 1 to 4 are Extracellular-facing; it reads MLSL. The helical transmembrane segment at 5 to 25 threads the bilayer; sequence GFIALGAAVSIAVIVWALLYR. Topologically, residues 26–83 are cytoplasmic; the sequence is EYKKIKLQEKIKHIRQRIREREEDSGNESDGDAEWLDGDEEWLVTLLSSSKLDQGNWV. Phosphoserine; by host CK2 occurs at positions 50 and 54.

Belongs to the HIV-1 VPU protein family. In terms of assembly, homopentamer. Interacts with host CD4 and BRTC; these interactions induce proteasomal degradation of CD4. Interacts with host BST2; this interaction leads to the degradation of host BST2. Interacts with host FBXW11. Interacts with host AP1M1; this interaction plays a role in the mistrafficking and subsequent degradation of host BST2. Interacts with host RANBP2; this interaction allows Vpu to down-regulate host BLM sumoylation. Phosphorylated by host CK2. This phosphorylation is necessary for interaction with human BTRC and degradation of CD4.

It is found in the host membrane. Ion channel activity is inhibited by hexamethylene amiloride in vitro. Its function is as follows. Enhances virion budding by targeting host CD4 and Tetherin/BST2 to proteasome degradation. Degradation of CD4 prevents any unwanted premature interactions between viral Env and its host receptor CD4 in the endoplasmic reticulum. Degradation of antiretroviral protein Tetherin/BST2 is important for virion budding, as BST2 tethers new viral particles to the host cell membrane. Mechanistically, Vpu bridges either CD4 or BST2 to BTRC, a substrate recognition subunit of the Skp1/Cullin/F-box protein E3 ubiquitin ligase, induces their ubiquitination and subsequent proteasomal degradation. The alteration of the E3 ligase specificity by Vpu seems to promote the degradation of host IKBKB, leading to NF-kappa-B down-regulation and subsequent apoptosis. Acts as a viroporin that forms an oligomeric ion channel in membranes. Modulates the host DNA repair mechanisms to promote degradation of nuclear viral cDNA in cells that are already productively infected in order to suppress immune sensing and proviral hyper-integration (superinfection). Manipulates PML-NBs and modulates SUMOylation of host BLM protein thereby enhancing its DNA-end processing activity toward viral unintegrated linear DNA. Also inhibits RAD52-mediated homologous repair of viral cDNA, preventing the generation of dead-end circular forms of single copies of the long terminal repeat and permitting sustained nucleolytic attack. The protein is Protein Vpu of Human immunodeficiency virus type 1 group N (isolate YBF30) (HIV-1).